We begin with the raw amino-acid sequence, 780 residues long: Ino eighty subunit 1 (780 aa).

Disordered stretches follow at residues 1–25 (MADVESAGVDDSFAQSEPHDEQQIH) and 563–780 (ANGP…PGWN). Over residues 563–584 (ANGPRRDRKKEREERQKAREEA) the composition is skewed to basic and acidic residues. Residues 600 to 613 (SRARAQRNAKRKLA) are compositionally biased toward basic residues. The span at 614 to 635 (RAAAAASSTPSASTPKTAAARS) shows a compositional bias: low complexity. Acidic residues-rich tracts occupy residues 676 to 686 (LEGEESLDDID) and 723 to 751 (DADDALSSDEEEEEAEDEELDEMDVEGDD).

In terms of assembly, component of the chromatin-remodeling INO80 complex.

The protein localises to the nucleus. Probably involved in transcription regulation via its interaction with the INO80 complex, a chromatin-remodeling complex. In Emericella nidulans (strain FGSC A4 / ATCC 38163 / CBS 112.46 / NRRL 194 / M139) (Aspergillus nidulans), this protein is Ino eighty subunit 1.